A 149-amino-acid chain; its full sequence is D-aminoacyl-tRNA deacylase (149 aa).

The Gly-cisPro motif, important for rejection of L-amino acids signature appears at 137–138 (GP).

This sequence belongs to the DTD family. As to quaternary structure, homodimer.

The protein localises to the cytoplasm. It catalyses the reaction glycyl-tRNA(Ala) + H2O = tRNA(Ala) + glycine + H(+). It carries out the reaction a D-aminoacyl-tRNA + H2O = a tRNA + a D-alpha-amino acid + H(+). An aminoacyl-tRNA editing enzyme that deacylates mischarged D-aminoacyl-tRNAs. Also deacylates mischarged glycyl-tRNA(Ala), protecting cells against glycine mischarging by AlaRS. Acts via tRNA-based rather than protein-based catalysis; rejects L-amino acids rather than detecting D-amino acids in the active site. By recycling D-aminoacyl-tRNA to D-amino acids and free tRNA molecules, this enzyme counteracts the toxicity associated with the formation of D-aminoacyl-tRNA entities in vivo and helps enforce protein L-homochirality. The protein is D-aminoacyl-tRNA deacylase of Syntrophomonas wolfei subsp. wolfei (strain DSM 2245B / Goettingen).